The following is a 141-amino-acid chain: Ly6/PLAUR domain-containing protein 1 (141 aa).

The N-terminal stretch at 1-20 (MWVLGIAATFCGLFWLPGLA) is a signal peptide. Cystine bridges form between cysteine 25–cysteine 54, cysteine 28–cysteine 37, cysteine 46–cysteine 71, cysteine 77–cysteine 100, cysteine 88–cysteine 97, and cysteine 101–cysteine 106. Residues 25–108 (CYQCEEFQLN…SCCNTPLCNG (84 aa)) form the UPAR/Ly6 domain. A glycan (N-linked (GlcNAc...) asparagine) is linked at asparagine 45. The GPI-anchor amidated glycine moiety is linked to residue glycine 115. A propeptide spans 116 to 141 (SSASAIRPELFTTVLFFNLALCLAHC) (removed in mature form).

Interacts with CHRNA4 and nAChRs containing alpha-4:beta-2 (CHRNA4:CHRNB2) and alpha-7 (CHRNA7) subunits.

The protein resides in the cell membrane. In terms of biological role, believed to act as a modulator of nicotinic acetylcholine receptors (nAChRs) activity. In vitro increases receptor desensitization and decreases affinity for ACh of alpha-4:beta-2-containing nAChRs. May play a role in the intracellular trafficking of alpha-4:beta-2 and alpha-7-containing nAChRs and may inhibit their expression at the cell surface. May be involved in the control of anxiety. The polypeptide is Ly6/PLAUR domain-containing protein 1 (Lypd1) (Rattus norvegicus (Rat)).